The primary structure comprises 576 residues: Putative export ATP-binding/permease protein RC1073 (576 aa).

In terms of domain architecture, ABC transmembrane type-1 spans L20–L303. 6 consecutive transmembrane segments (helical) span residues I21–F41, V57–F77, F135–F155, F158–F178, A242–I262, and I277–L297. Positions I336–E572 constitute an ABC transporter domain. Position 371–378 (G371–S378) interacts with ATP.

Belongs to the ABC transporter superfamily. As to quaternary structure, homodimer.

The protein localises to the cell inner membrane. Functionally, part of an ABC transporter complex. Transmembrane domains (TMD) form a pore in the inner membrane and the ATP-binding domain (NBD) is responsible for energy generation. This chain is Putative export ATP-binding/permease protein RC1073, found in Rickettsia conorii (strain ATCC VR-613 / Malish 7).